We begin with the raw amino-acid sequence, 124 residues long: Small ribosomal subunit protein uS12 (124 aa).

3-methylthioaspartic acid is present on Asp89.

The protein belongs to the universal ribosomal protein uS12 family. As to quaternary structure, part of the 30S ribosomal subunit. Contacts proteins S8 and S17. May interact with IF1 in the 30S initiation complex.

In terms of biological role, with S4 and S5 plays an important role in translational accuracy. Its function is as follows. Interacts with and stabilizes bases of the 16S rRNA that are involved in tRNA selection in the A site and with the mRNA backbone. Located at the interface of the 30S and 50S subunits, it traverses the body of the 30S subunit contacting proteins on the other side and probably holding the rRNA structure together. The combined cluster of proteins S8, S12 and S17 appears to hold together the shoulder and platform of the 30S subunit. The sequence is that of Small ribosomal subunit protein uS12 from Psychrobacter sp. (strain PRwf-1).